The chain runs to 400 residues: UDP-glucuronate:glycolipid 2-beta-glucuronosyltransferase (400 aa).

Asp-157 acts as the Proton acceptor in catalysis. Residues 230–231, 272–273, Tyr-292, and 306–310 contribute to the UDP-alpha-D-glucuronate site; these read SM, EM, and MKLLQ. A disordered region spans residues 377–400; that stretch reads PETRLYPHPPTAAPQLSSEAALSH. Residues 390 to 400 show a composition bias toward polar residues; that stretch reads PQLSSEAALSH.

Belongs to the glycosyltransferase 70 family.

It is found in the cell inner membrane. The catalysed reaction is alpha-D-Man-(1-&gt;3)-beta-D-Glc-(1-&gt;4)-alpha-D-Glc-1-di-trans,octa-cis-undecaprenyl diphosphate + UDP-alpha-D-glucuronate = beta-D-GlcA-(1-&gt;2)-alpha-D-Man-(1-&gt;3)-beta-D-Glc-(1-&gt;4)-alpha-D-Glc-di-trans,octa-cis-undecaprenyl diphosphate + UDP + H(+). The protein operates within glycan biosynthesis; xanthan biosynthesis. Its function is as follows. Catalyzes the transfer of a glucuronic acid (GlcA) residue from UDP-glucuronate to mannose-alpha-1,3-glucose-beta-1,4-glucose-P-P-polyisoprenyl to form the lipid-linked tetrasaccharide GlcA-Man-Glc(2)-PP-Pol, with a glucuronic acid-beta-mannose linkage. Is involved in the biosynthesis of the exopolysaccharide xanthan, since it catalyzes the fourth glycosylation step in the assembly of the pentasaccharide-P-P-polyisoprenyl repeating unit of xanthan. Is unable to use the trisaccharide acceptor freed from the pyrophosphate lipid moiety. Does not show specificity for the lipidic portion of the acceptor. Shows diminished activity when tested with 6-O-acetyl-mannose-alpha-1,3-glucose-beta-1,4-glucose-P-P-polyisoprenyl, a putative intermediate in the synthesis of xanthan; this could indicate that acetylation of the internal mannose takes place after the formation of the GumK product. The sequence is that of UDP-glucuronate:glycolipid 2-beta-glucuronosyltransferase (gumK) from Xanthomonas campestris pv. campestris.